The primary structure comprises 389 residues: Na(+)/H(+) antiporter NhaA 1 (389 aa).

The next 11 helical transmembrane spans lie at 12-32, 62-82, 97-117, 128-148, 157-177, 184-204, 220-240, 260-280, 282-302, 331-351, and 365-385; these read VLNE…ALLV, FLLW…GLEL, IVLP…LFAL, GWAI…MMCG, IFLL…IAIF, IAAF…NLLG, ISVL…AFFI, FWIA…VNLS, IDIG…LFVG, LYGV…IDGL, and LAIL…LKFF.

Belongs to the NhaA Na(+)/H(+) (TC 2.A.33) antiporter family.

The protein resides in the cell inner membrane. The enzyme catalyses Na(+)(in) + 2 H(+)(out) = Na(+)(out) + 2 H(+)(in). Its function is as follows. Na(+)/H(+) antiporter that extrudes sodium in exchange for external protons. The sequence is that of Na(+)/H(+) antiporter NhaA 1 from Campylobacter jejuni subsp. jejuni serotype O:2 (strain ATCC 700819 / NCTC 11168).